The sequence spans 319 residues: tRNA uridine(34) hydroxylase (319 aa).

The Rhodanese domain occupies 127-221 (KQEDTVIIDA…YGKDPEVQGE (95 aa)). Cys181 acts as the Cysteine persulfide intermediate in catalysis.

It belongs to the TrhO family.

The catalysed reaction is uridine(34) in tRNA + AH2 + O2 = 5-hydroxyuridine(34) in tRNA + A + H2O. In terms of biological role, catalyzes oxygen-dependent 5-hydroxyuridine (ho5U) modification at position 34 in tRNAs. The protein is tRNA uridine(34) hydroxylase of Bacillus mycoides (strain KBAB4) (Bacillus weihenstephanensis).